Here is a 291-residue protein sequence, read N- to C-terminus: Transmembrane protein 41B (291 aa).

The interval 1 to 38 (MAKGRVAERSQMGADHTTPVGDGAAGTRGPAAPGSRDY) is disordered. The residue at position 18 (T18) is a Phosphothreonine. Residues 21–34 (GDGAAGTRGPAAPG) show a composition bias toward low complexity. S35 carries the post-translational modification Phosphoserine. The next 6 membrane-spanning stretches (helical) occupy residues 52 to 72 (MSLL…FLVY), 109 to 129 (FYVQ…TFAI), 147 to 169 (LALF…LSYL), 197 to 217 (LINY…FINI), 225 to 245 (PLKV…FVAI), and 262 to 282 (SWNS…PAIF). The segment at 140–251 (GFLYPFPLAL…FVAIKAGTTL (112 aa)) is VTT domain; required for its function in autophagy.

This sequence belongs to the TMEM41 family. As to quaternary structure, interacts with VMP1. Interacts with COPA, COPB1, VDAC1 and ERLIN2. Interacts with ATG2A. Interacts with SURF4.

Its subcellular location is the endoplasmic reticulum membrane. It is found in the endomembrane system. The catalysed reaction is a 1,2-diacyl-sn-glycero-3-phospho-L-serine(in) = a 1,2-diacyl-sn-glycero-3-phospho-L-serine(out). The enzyme catalyses cholesterol(in) = cholesterol(out). It carries out the reaction a 1,2-diacyl-sn-glycero-3-phosphocholine(in) = a 1,2-diacyl-sn-glycero-3-phosphocholine(out). It catalyses the reaction a 1,2-diacyl-sn-glycero-3-phosphoethanolamine(in) = a 1,2-diacyl-sn-glycero-3-phosphoethanolamine(out). Its function is as follows. Phospholipid scramblase involved in lipid homeostasis and membrane dynamics processes. Has phospholipid scramblase activity toward cholesterol and phosphatidylserine, as well as phosphatidylethanolamine and phosphatidylcholine. Required for autophagosome formation: participates in early stages of autophagosome biogenesis at the endoplasmic reticulum (ER) membrane by reequilibrating the leaflets of the ER as lipids are extracted by ATG2 (ATG2A or ATG2B) to mediate autophagosome assembly. In addition to autophagy, involved in other processes in which phospholipid scramblase activity is required. Required for normal motor neuron development. This chain is Transmembrane protein 41B, found in Pongo abelii (Sumatran orangutan).